The sequence spans 277 residues: Sulfur carrier protein FdhD (277 aa).

Residue Cys-123 is the Cysteine persulfide intermediate of the active site. 263–268 is a Mo-bis(molybdopterin guanine dinucleotide) binding site; sequence FVRGNK.

This sequence belongs to the FdhD family.

The protein resides in the cytoplasm. Functionally, required for formate dehydrogenase (FDH) activity. Acts as a sulfur carrier protein that transfers sulfur from IscS to the molybdenum cofactor prior to its insertion into FDH. The polypeptide is Sulfur carrier protein FdhD (Corynebacterium efficiens (strain DSM 44549 / YS-314 / AJ 12310 / JCM 11189 / NBRC 100395)).